The primary structure comprises 365 residues: DNA replication and repair protein RecF (365 aa).

30–37 (GLNAQGKT) serves as a coordination point for ATP.

The protein belongs to the RecF family.

The protein resides in the cytoplasm. Its function is as follows. The RecF protein is involved in DNA metabolism; it is required for DNA replication and normal SOS inducibility. RecF binds preferentially to single-stranded, linear DNA. It also seems to bind ATP. This Chlamydia trachomatis serovar A (strain ATCC VR-571B / DSM 19440 / HAR-13) protein is DNA replication and repair protein RecF.